The sequence spans 607 residues: All-trans-retinol 13,14-reductase (607 aa).

The N-terminal stretch at 1–22 (MWFAVVAIFLALVAFLYRYVVG) is a signal peptide.

It belongs to the carotenoid/retinoid oxidoreductase family. CrtISO subfamily. NAD(+) is required as a cofactor. It depends on NADP(+) as a cofactor. The cofactor is FAD.

Its subcellular location is the endoplasmic reticulum membrane. It catalyses the reaction all-trans-13,14-dihydroretinol + A = all-trans-retinol + AH2. Catalyzes the saturation of all-trans-retinol to all-trans-13,14-dihydroretinol. In addition, saturates the 7-8 double bond of all-trans-retinol to produce all-trans-7,8-dihydroretinol. Can also use vitamin A2 (all-trans-3,4-didehydroretinol) as a substrate, to produce all-trans-13,14-dihydro-3,4-didehydroretinol or all-trans-7,8-dihydro-3,4-didehydroretinol. May play a role in vitamin A metabolism. The chain is All-trans-retinol 13,14-reductase from Danio rerio (Zebrafish).